A 327-amino-acid chain; its full sequence is Zinc transport protein ZntB (327 aa).

Over 1–273 (MEAIKGSEVN…SRRSYTMSLM (273 aa)) the chain is Cytoplasmic. The helical transmembrane segment at 274–294 (AMVFLPSTFLTGLFGVNLGGI) threads the bilayer. Residues 295 to 300 (PGGGWH) lie on the Periplasmic side of the membrane. A helical transmembrane segment spans residues 301–321 (LGFSVFCVALVLLIGGVTWWL). Over 322-327 (HRSKWL) the chain is Cytoplasmic.

The protein belongs to the CorA metal ion transporter (MIT) (TC 1.A.35) family.

Its subcellular location is the cell inner membrane. The catalysed reaction is Zn(2+)(out) + H(+)(out) = Zn(2+)(in) + H(+)(in). Functionally, zinc transporter. Acts as a Zn(2+):proton symporter, which likely mediates zinc ion uptake. The protein is Zinc transport protein ZntB of Cronobacter sakazakii (strain ATCC BAA-894) (Enterobacter sakazakii).